The chain runs to 394 residues: Acid ceramidase (394 aa).

The N-terminal stretch at M1 to A18 is a signal peptide. The cysteines at positions 30 and 339 are disulfide-linked. C142 (nucleophile) is an active-site residue. N172, N194, N258, N341, and N347 each carry an N-linked (GlcNAc...) asparagine glycan. C387 and C391 are oxidised to a cystine.

It belongs to the acid ceramidase family. In terms of assembly, heterodimer; disulfide-linked. The heterodimer is composed of the disulfide-linked alpha and beta chains produced by autocatalytic cleavage of the precursor. N-glycosylated. In terms of processing, proteolytically cleaved into two chains alpha and beta that remain associated via a disulfide bond. Cleavage gives rise to a conformation change that activates the enzyme. The same catalytic Cys residue mediates the autoproteolytic cleavage and subsequent hydrolysis of lipid substrates. The beta chain may undergo an additional C-terminal processing. Widely expressed.

It localises to the lysosome. The protein resides in the secreted. The enzyme catalyses an N-acylsphing-4-enine + H2O = sphing-4-enine + a fatty acid. The catalysed reaction is N-dodecanoylsphing-4-enine + H2O = dodecanoate + sphing-4-enine. It catalyses the reaction N-(9Z-octadecenoyl)-sphing-4-enine + H2O = sphing-4-enine + (9Z)-octadecenoate. It carries out the reaction N-tetradecanoylsphing-4-enine + H2O = tetradecanoate + sphing-4-enine. The enzyme catalyses N-hexadecanoylsphing-4-enine + H2O = sphing-4-enine + hexadecanoate. The catalysed reaction is N-octadecanoylsphing-4-enine + H2O = sphing-4-enine + octadecanoate. It catalyses the reaction N-dodecanoyl-(4R)-hydroxysphinganine + H2O = (4R)-hydroxysphinganine + dodecanoate. It carries out the reaction N-(dodecanoyl)-sphinganine + H2O = dodecanoate + sphinganine. The enzyme catalyses N-(acetyl)-sphing-4-enine + H2O = sphing-4-enine + acetate. The catalysed reaction is N-(hexanoyl)sphing-4-enine + H2O = hexanoate + sphing-4-enine. It catalyses the reaction N-octanoylsphing-4-enine + H2O = octanoate + sphing-4-enine. It carries out the reaction N-dodecanoylethanolamine + H2O = dodecanoate + ethanolamine. The protein operates within lipid metabolism; sphingolipid metabolism. Functionally, lysosomal ceramidase that hydrolyzes sphingolipid ceramides into sphingosine and free fatty acids at acidic pH. Ceramides, sphingosine, and its phosphorylated form sphingosine-1-phosphate are bioactive lipids that mediate cellular signaling pathways regulating several biological processes including cell proliferation, apoptosis and differentiation. Has a higher catalytic efficiency towards C12-ceramides versus other ceramides. Also catalyzes the reverse reaction allowing the synthesis of ceramides from fatty acids and sphingosine. For the reverse synthetic reaction, the natural sphingosine D-erythro isomer is more efficiently utilized as a substrate compared to D-erythro-dihydrosphingosine and D-erythro-phytosphingosine, while the fatty acids with chain lengths of 12 or 14 carbons are the most efficiently used. Also has an N-acylethanolamine hydrolase activity. By regulating the levels of ceramides, sphingosine and sphingosine-1-phosphate in the epidermis, mediates the calcium-induced differentiation of epidermal keratinocytes. Also indirectly regulates tumor necrosis factor/TNF-induced apoptosis. By regulating the intracellular balance between ceramides and sphingosine, in adrenocortical cells, probably also acts as a regulator of steroidogenesis. The chain is Acid ceramidase from Mus musculus (Mouse).